Consider the following 365-residue polypeptide: Cytoplasmic tRNA 2-thiolation protein 1 (365 aa).

This sequence belongs to the TtcA family. CTU1/NCS6/ATPBD3 subfamily.

It is found in the cytoplasm. Its pathway is tRNA modification; 5-methoxycarbonylmethyl-2-thiouridine-tRNA biosynthesis. Functionally, plays a central role in 2-thiolation of mcm(5)S(2)U at tRNA wobble positions of tRNA(Lys), tRNA(Glu) and tRNA(Gln). Directly binds tRNAs and probably acts by catalyzing adenylation of tRNAs, an intermediate required for 2-thiolation. It is unclear whether it acts as a sulfurtransferase that transfers sulfur from thiocarboxylated URM1 onto the uridine of tRNAs at wobble position. Prior mcm(5) tRNA modification by the elongator complex is required for 2-thiolation. May also be involved in protein urmylation. The chain is Cytoplasmic tRNA 2-thiolation protein 1 from Yarrowia lipolytica (strain CLIB 122 / E 150) (Yeast).